A 237-amino-acid chain; its full sequence is Large ribosomal subunit protein uL1 (237 aa).

It belongs to the universal ribosomal protein uL1 family. In terms of assembly, part of the 50S ribosomal subunit.

In terms of biological role, binds directly to 23S rRNA. The L1 stalk is quite mobile in the ribosome, and is involved in E site tRNA release. Protein L1 is also a translational repressor protein, it controls the translation of the L11 operon by binding to its mRNA. The chain is Large ribosomal subunit protein uL1 from Dehalococcoides mccartyi (strain ATCC BAA-2266 / KCTC 15142 / 195) (Dehalococcoides ethenogenes (strain 195)).